The primary structure comprises 258 residues: MLVLYGHSTQDLPETNARVVGGTEAGRNSWPSQISLQYRSGGSRYHTCGGTLIRQNWVMTAAHCVDYQKTFRVVAGDHNLSQNDGTEQYVSVQKIVVHPYWNSDNVAAGYDIALLRLAQSVTLNSYVQLGVLPQEGAILANNSPCYITGWGKTKTNGQLAQTLQQAYLPSVDYAICSSSSYWGSTVKNTMVCAGGDGVRSGCQGDSGGPLHCLVNGKYSVHGVTSFVSSRGCNVSRKPTVFTQVSAYISWINNVIASN.

Positions 1–8 (MLVLYGHS) are cleaved as a signal peptide. Positions 9-18 (TQDLPETNAR) are cleaved as a propeptide — activation peptide. Residues 19–256 (VVGGTEAGRN…YISWINNVIA (238 aa)) form the Peptidase S1 domain. A disulfide bridge links cysteine 48 with cysteine 64. Catalysis depends on histidine 63, which acts as the Charge relay system. Residues aspartate 77, asparagine 79, glutamine 82, and glutamate 87 each coordinate Ca(2+). N-linked (GlcNAc...) asparagine glycosylation occurs at asparagine 79. Aspartate 111 acts as the Charge relay system in catalysis. 3 disulfide bridges follow: cysteine 145-cysteine 212, cysteine 176-cysteine 192, and cysteine 202-cysteine 232. Catalysis depends on serine 206, which acts as the Charge relay system. Asparagine 233 is a glycosylation site (N-linked (GlcNAc...) asparagine).

The protein belongs to the peptidase S1 family. Elastase subfamily. Ca(2+) serves as cofactor. Basal layers of epidermis (at protein level). Not expressed in the pancreas.

It localises to the secreted. The catalysed reaction is Hydrolysis of proteins, including elastin. Preferential cleavage: Ala-|-Xaa.. Functionally, serine proteases that hydrolyze many proteins in addition to elastin. The chain is Chymotrypsin-like elastase family member 1 (CELA1) from Homo sapiens (Human).